We begin with the raw amino-acid sequence, 420 residues long: Isocitrate dehydrogenase [NADP] (420 aa).

NADP(+) contacts are provided by residues threonine 75–threonine 77 and arginine 82. Threonine 77 contributes to the substrate binding site. Residues serine 94–arginine 100, arginine 109, and arginine 132 contribute to the substrate site. Mn(2+) is bound at residue aspartate 252. Lysine 260 is an NADP(+) binding site. Residue aspartate 275 coordinates Mn(2+). NADP(+)-binding positions include glycine 310–histidine 315 and asparagine 328.

Belongs to the isocitrate and isopropylmalate dehydrogenases family. The cofactor is Mg(2+). It depends on Mn(2+) as a cofactor.

It carries out the reaction D-threo-isocitrate + NADP(+) = 2-oxoglutarate + CO2 + NADPH. In terms of biological role, may function in the production of NADPH for fatty acid and sterol synthesis. The chain is Isocitrate dehydrogenase [NADP] (IDP3) from Saccharomyces cerevisiae (strain ATCC 204508 / S288c) (Baker's yeast).